Consider the following 299-residue polypeptide: Putative KilA-N domain-containing protein R879 (299 aa).

One can recognise a KilA-N domain in the interval 1–75 (MKSDNGILMS…IKVSEIVLSY (75 aa)). A coiled-coil region spans residues 76-150 (HAKEAIKEKE…DKKINELLSK (75 aa)).

The polypeptide is Putative KilA-N domain-containing protein R879 (Acanthamoeba polyphaga mimivirus (APMV)).